We begin with the raw amino-acid sequence, 55 residues long: Large ribosomal subunit protein bL33 (55 aa).

It belongs to the bacterial ribosomal protein bL33 family.

The polypeptide is Large ribosomal subunit protein bL33 (Micrococcus luteus (strain ATCC 4698 / DSM 20030 / JCM 1464 / CCM 169 / CCUG 5858 / IAM 1056 / NBRC 3333 / NCIMB 9278 / NCTC 2665 / VKM Ac-2230) (Micrococcus lysodeikticus)).